Reading from the N-terminus, the 170-residue chain is Protein-export protein SecB (170 aa).

This sequence belongs to the SecB family. In terms of assembly, homotetramer, a dimer of dimers. One homotetramer interacts with 1 SecA dimer.

It localises to the cytoplasm. Its function is as follows. One of the proteins required for the normal export of preproteins out of the cell cytoplasm. It is a molecular chaperone that binds to a subset of precursor proteins, maintaining them in a translocation-competent state. It also specifically binds to its receptor SecA. This is Protein-export protein SecB from Pasteurella multocida (strain Pm70).